The chain runs to 424 residues: UDP-N-acetylglucosamine 1-carboxyvinyltransferase (424 aa).

22–23 (KN) is a phosphoenolpyruvate binding site. R93 is a UDP-N-acetyl-alpha-D-glucosamine binding site. C117 acts as the Proton donor in catalysis. Residue C117 is modified to 2-(S-cysteinyl)pyruvic acid O-phosphothioketal. Residues 122–126 (RPVDL), D307, and I329 each bind UDP-N-acetyl-alpha-D-glucosamine.

It belongs to the EPSP synthase family. MurA subfamily.

The protein localises to the cytoplasm. The enzyme catalyses phosphoenolpyruvate + UDP-N-acetyl-alpha-D-glucosamine = UDP-N-acetyl-3-O-(1-carboxyvinyl)-alpha-D-glucosamine + phosphate. It functions in the pathway cell wall biogenesis; peptidoglycan biosynthesis. Its function is as follows. Cell wall formation. Adds enolpyruvyl to UDP-N-acetylglucosamine. The protein is UDP-N-acetylglucosamine 1-carboxyvinyltransferase of Chlorobaculum parvum (strain DSM 263 / NCIMB 8327) (Chlorobium vibrioforme subsp. thiosulfatophilum).